The chain runs to 147 residues: Hemoglobin subunit delta (147 aa).

In terms of domain architecture, Globin spans His-3–His-147. Residues His-64 and His-93 each contribute to the heme b site.

This sequence belongs to the globin family. Heterotetramer of two delta chains and two alpha chains. As to expression, red blood cells.

The protein is Hemoglobin subunit delta (HBD) of Ailuropoda melanoleuca (Giant panda).